Here is a 100-residue protein sequence, read N- to C-terminus: Small ribosomal subunit protein uS14c (100 aa).

Belongs to the universal ribosomal protein uS14 family. As to quaternary structure, component of the chloroplast small ribosomal subunit (SSU). Mature 70S chloroplast ribosomes of higher plants consist of a small (30S) and a large (50S) subunit. The 30S small subunit contains 1 molecule of ribosomal RNA (16S rRNA) and 24 different proteins. The 50S large subunit contains 3 rRNA molecules (23S, 5S and 4.5S rRNA) and 33 different proteins.

Its subcellular location is the plastid. The protein resides in the chloroplast. Its function is as follows. Component of the chloroplast ribosome (chloro-ribosome), a dedicated translation machinery responsible for the synthesis of chloroplast genome-encoded proteins, including proteins of the transcription and translation machinery and components of the photosynthetic apparatus. The sequence is that of Small ribosomal subunit protein uS14c from Spinacia oleracea (Spinach).